The chain runs to 556 residues: Glucose-6-phosphate isomerase (556 aa).

Residue Glu360 is the Proton donor of the active site. Catalysis depends on residues His391 and Lys519.

This sequence belongs to the GPI family.

The protein localises to the cytoplasm. It carries out the reaction alpha-D-glucose 6-phosphate = beta-D-fructose 6-phosphate. Its pathway is carbohydrate biosynthesis; gluconeogenesis. The protein operates within carbohydrate degradation; glycolysis; D-glyceraldehyde 3-phosphate and glycerone phosphate from D-glucose: step 2/4. Catalyzes the reversible isomerization of glucose-6-phosphate to fructose-6-phosphate. The chain is Glucose-6-phosphate isomerase from Acinetobacter baumannii (strain ATCC 17978 / DSM 105126 / CIP 53.77 / LMG 1025 / NCDC KC755 / 5377).